The following is a 248-amino-acid chain: Zinc finger CCCH domain-containing protein 36 (248 aa).

Disordered stretches follow at residues 1 to 37 and 87 to 110; these read MDTR…GLGS and MQGS…VSNF. The C3H1-type 1 zinc-finger motif lies at 36-64; the sequence is GSKSKPCTKFFSTSGCPFGENCHFLHYVP. The span at 90–103 shows a compositional bias: gly residues; it reads SGNGGRFSGRGESG. One can recognise a KH domain in the interval 113 to 177; it reads SATARFSVDA…EQISEASAMV (65 aa). The disordered stretch occupies residues 188–209; sequence AKKPPGGGLGGGGGMGSEGKPH. Gly residues predominate over residues 192-204; the sequence is PGGGLGGGGGMGS. The C3H1-type 2 zinc-finger motif lies at 213 to 240; it reads NFKTKICERFSKGNCTFGDRCHFAHGEA.

This Arabidopsis thaliana (Mouse-ear cress) protein is Zinc finger CCCH domain-containing protein 36.